We begin with the raw amino-acid sequence, 169 residues long: Peptide methionine sulfoxide reductase MsrA (169 aa).

Residue cysteine 10 is part of the active site.

It belongs to the MsrA Met sulfoxide reductase family.

It carries out the reaction L-methionyl-[protein] + [thioredoxin]-disulfide + H2O = L-methionyl-(S)-S-oxide-[protein] + [thioredoxin]-dithiol. The enzyme catalyses [thioredoxin]-disulfide + L-methionine + H2O = L-methionine (S)-S-oxide + [thioredoxin]-dithiol. Functionally, has an important function as a repair enzyme for proteins that have been inactivated by oxidation. Catalyzes the reversible oxidation-reduction of methionine sulfoxide in proteins to methionine. In Streptococcus agalactiae serotype III (strain NEM316), this protein is Peptide methionine sulfoxide reductase MsrA.